The sequence spans 87 residues: Probable Fe(2+)-trafficking protein (87 aa).

It belongs to the Fe(2+)-trafficking protein family.

Its function is as follows. Could be a mediator in iron transactions between iron acquisition and iron-requiring processes, such as synthesis and/or repair of Fe-S clusters in biosynthetic enzymes. The sequence is that of Probable Fe(2+)-trafficking protein from Francisella philomiragia subsp. philomiragia (strain ATCC 25017 / CCUG 19701 / FSC 153 / O#319-036).